The primary structure comprises 724 residues: ATPase family protein 2 homolog (724 aa).

Residues 281-287 (PGSGKTL) and 503-508 (GCSKTL) each bind ATP.

This sequence belongs to the AAA ATPase family. AFG2 subfamily. As to quaternary structure, homohexamer; ATP binding induces oligomerization. Forms a ring-shaped particle of about 12 nm diameter, that displays 6-fold radial symmetry. Interacts (via N-terminus) with kinase air-2; the interaction is direct and inhibits air-2 kinase activity in an ATPase-dependent manner.

It is found in the cytoplasm. The catalysed reaction is ATP + H2O = ADP + phosphate + H(+). Its function is as follows. ATP-dependent chaperone which uses the energy provided by ATP hydrolysis to generate mechanical force to disassemble protein complexes. Required for various steps of embryonic mitosis including centrosome duplication, spindle assembly, ER dynamics and cell cycle progression. Regulates the stability and activity of kinase air-2, a component of the chromosomal passenger complex (CPC). Inhibits air-2 kinase activity from metaphase to late telophase and negatively regulates air-2 stability during mitotic exit. Controls ER transition into sheet-like structures at the onset of mitosis, possibly by regulating homotypic membrane fusion. This chain is ATPase family protein 2 homolog, found in Caenorhabditis elegans.